We begin with the raw amino-acid sequence, 267 residues long: Tryptophan synthase alpha chain (267 aa).

Catalysis depends on proton acceptor residues E49 and D60.

This sequence belongs to the TrpA family. As to quaternary structure, tetramer of two alpha and two beta chains.

The enzyme catalyses (1S,2R)-1-C-(indol-3-yl)glycerol 3-phosphate + L-serine = D-glyceraldehyde 3-phosphate + L-tryptophan + H2O. The protein operates within amino-acid biosynthesis; L-tryptophan biosynthesis; L-tryptophan from chorismate: step 5/5. Functionally, the alpha subunit is responsible for the aldol cleavage of indoleglycerol phosphate to indole and glyceraldehyde 3-phosphate. This chain is Tryptophan synthase alpha chain, found in Geotalea uraniireducens (strain Rf4) (Geobacter uraniireducens).